A 363-amino-acid polypeptide reads, in one-letter code: NADH-quinone oxidoreductase subunit H (363 aa).

Transmembrane regions (helical) follow at residues glycine 62 to phenylalanine 82, alanine 94 to valine 114, valine 127 to glycine 147, valine 166 to serine 186, phenylalanine 202 to valine 222, isoleucine 239 to leucine 257, isoleucine 264 to valine 286, leucine 293 to alanine 313, and phenylalanine 339 to isoleucine 359.

It belongs to the complex I subunit 1 family. As to quaternary structure, NDH-1 is composed of 14 different subunits. Subunits NuoA, H, J, K, L, M, N constitute the membrane sector of the complex.

It localises to the cell inner membrane. It catalyses the reaction a quinone + NADH + 5 H(+)(in) = a quinol + NAD(+) + 4 H(+)(out). Functionally, NDH-1 shuttles electrons from NADH, via FMN and iron-sulfur (Fe-S) centers, to quinones in the respiratory chain. The immediate electron acceptor for the enzyme in this species is believed to be ubiquinone. Couples the redox reaction to proton translocation (for every two electrons transferred, four hydrogen ions are translocated across the cytoplasmic membrane), and thus conserves the redox energy in a proton gradient. This subunit may bind ubiquinone. The sequence is that of NADH-quinone oxidoreductase subunit H from Xylella fastidiosa (strain 9a5c).